The primary structure comprises 277 residues: N-acetylmuramic acid 6-phosphate etherase (277 aa).

In terms of domain architecture, SIS spans 53–216 (IIPRVKKGGR…STTIMIELGR (164 aa)). The active-site Proton donor is the Glu81. Residue Glu112 is part of the active site.

It belongs to the GCKR-like family. MurNAc-6-P etherase subfamily. As to quaternary structure, homodimer.

It catalyses the reaction N-acetyl-D-muramate 6-phosphate + H2O = N-acetyl-D-glucosamine 6-phosphate + (R)-lactate. Its pathway is amino-sugar metabolism; N-acetylmuramate degradation. Functionally, specifically catalyzes the cleavage of the D-lactyl ether substituent of MurNAc 6-phosphate, producing GlcNAc 6-phosphate and D-lactate. The polypeptide is N-acetylmuramic acid 6-phosphate etherase (Bacteroides thetaiotaomicron (strain ATCC 29148 / DSM 2079 / JCM 5827 / CCUG 10774 / NCTC 10582 / VPI-5482 / E50)).